The sequence spans 144 residues: Eukaryotic translation initiation factor 1A, Y-chromosomal (144 aa).

Positions 1-15 (MPKNKGKGGKNRRRG) are enriched in basic residues. The interval 1-26 (MPKNKGKGGKNRRRGKNENESEKREL) is disordered. Residues 16–26 (KNENESEKREL) show a composition bias toward basic and acidic residues. The region spanning 22–96 (EKRELVFKED…NKADVILKYN (75 aa)) is the S1-like domain. Lys-88 is covalently cross-linked (Glycyl lysine isopeptide (Lys-Gly) (interchain with G-Cter in ubiquitin)). The tract at residues 114 to 144 (KINETDTFGPGDDDEIQFDDIGDDDEDIDDI) is disordered. A compositionally biased stretch (acidic residues) spans 124–144 (GDDDEIQFDDIGDDDEDIDDI).

It belongs to the eIF-1A family. Component of the 43S pre-initiation complex (43S PIC), which is composed of the 40S ribosomal subunit, EIF1, eIF1A (EIF1AX), eIF3 complex, EIF5 and eIF2-GTP-initiator tRNA complex (eIF2 ternary complex). Interacts with EIF5; this interaction contributes to the maintenance of EIF1 within the open 43S PIC. Interacts through its C-terminal domain (CTD) with the CTD of EIF5B; from the location of the start codon by the 43S complex until the formation of the 80S complex. In terms of tissue distribution, ubiquitous.

It localises to the cytoplasm. Functionally, component of the 43S pre-initiation complex (43S PIC), which binds to the mRNA cap-proximal region, scans mRNA 5'-untranslated region, and locates the initiation codon. This protein enhances formation of the cap-proximal complex. Together with EIF1, facilitates scanning, start codon recognition, promotion of the assembly of 48S complex at the initiation codon (43S PIC becomes 48S PIC after the start codon is reached), and dissociation of aberrant complexes. After start codon location, together with EIF5B orients the initiator methionine-tRNA in a conformation that allows 60S ribosomal subunit joining to form the 80S initiation complex. Is released after 80S initiation complex formation, just after GTP hydrolysis by EIF5B, and before release of EIF5B. Its globular part is located in the A site of the 40S ribosomal subunit. Its interaction with EIF5 during scanning contribute to the maintenance of EIF1 within the open 43S PIC. In contrast to yeast orthologs, does not bind EIF1. The sequence is that of Eukaryotic translation initiation factor 1A, Y-chromosomal (EIF1AY) from Homo sapiens (Human).